The chain runs to 373 residues: Anhydro-N-acetylmuramic acid kinase (373 aa).

Gly13–Asp20 lines the ATP pocket.

This sequence belongs to the anhydro-N-acetylmuramic acid kinase family.

It catalyses the reaction 1,6-anhydro-N-acetyl-beta-muramate + ATP + H2O = N-acetyl-D-muramate 6-phosphate + ADP + H(+). It participates in amino-sugar metabolism; 1,6-anhydro-N-acetylmuramate degradation. It functions in the pathway cell wall biogenesis; peptidoglycan recycling. Its function is as follows. Catalyzes the specific phosphorylation of 1,6-anhydro-N-acetylmuramic acid (anhMurNAc) with the simultaneous cleavage of the 1,6-anhydro ring, generating MurNAc-6-P. Is required for the utilization of anhMurNAc either imported from the medium or derived from its own cell wall murein, and thus plays a role in cell wall recycling. This chain is Anhydro-N-acetylmuramic acid kinase, found in Brucella abortus (strain 2308).